We begin with the raw amino-acid sequence, 1939 residues long: Myosin-6 (1939 aa).

The 50-residue stretch at 32 to 81 (DIRTECFVPDDKEEFVKAKIVSREGGKVTAETENGKTVTVKEDQVMQQNP) folds into the Myosin N-terminal SH3-like domain. Positions 85–780 (DKIEDMAMLT…LLGLLEEMRD (696 aa)) constitute a Myosin motor domain. At K129 the chain carries N6,N6,N6-trimethyllysine. 178–185 (GESGAGKT) lines the ATP pocket. The residue at position 379 (T379) is a Phosphothreonine. At S417 the chain carries Phosphoserine. Actin-binding regions lie at residues 657 to 679 (LNKL…IPNE) and 759 to 773 (KFGH…GLLG). In terms of domain architecture, IQ spans 783-812 (LSRIITRIQAQARGQLMRIEFKKMVERRDA). Residues 842 to 1939 (LKSAETEKEM…GAKQKMHDEE (1098 aa)) adopt a coiled-coil conformation. 2 positions are modified to phosphoserine: S1090 and S1139. Y1261 bears the Phosphotyrosine mark. At S1271 the chain carries Phosphoserine. A phosphothreonine mark is found at T1277 and T1284. Residue S1309 is modified to Phosphoserine. Y1310 is modified (phosphotyrosine). Phosphothreonine is present on T1311. S1512 bears the Phosphoserine mark. Phosphothreonine is present on residues T1515 and T1681. The disordered stretch occupies residues 1908-1939 (AEERADIAESQVNKLRAKSRDIGAKQKMHDEE). Residues 1925–1939 (KSRDIGAKQKMHDEE) show a composition bias toward basic and acidic residues.

This sequence belongs to the TRAFAC class myosin-kinesin ATPase superfamily. Myosin family. Muscle myosin is a hexameric protein that consists of 2 heavy chain subunits (MHC), 2 alkali light chain subunits (MLC) and 2 regulatory light chain subunits (MLC-2).

It localises to the cytoplasm. It is found in the myofibril. In terms of biological role, muscle contraction. This chain is Myosin-6 (MYH6), found in Mesocricetus auratus (Golden hamster).